Consider the following 120-residue polypeptide: uncharacterized protein (120 aa).

Its subcellular location is the mitochondrion. This is an uncharacterized protein from Arabidopsis thaliana (Mouse-ear cress).